The following is a 327-amino-acid chain: Movement protein (327 aa).

Positions 297–327 (SASSSNTENELARVSQNIDLLKNKLKEICGE) form a coiled coil.

It belongs to the caulimoviridae movement protein family. In terms of assembly, homotrimer, through the coiled-coil domain. Interacts with VAP. May interact (via N-terminus) with host prenylated Rab acceptor protein 1D (PRA1D).

The protein resides in the host cell junction. It is found in the host plasmodesma. Functionally, transports viral genome to neighboring plant cells directly through plasmosdesmata, without any budding. The movement protein allows efficient cell to cell propagation, by bypassing the host cell wall barrier. Acts by forming tubules structures that increase the size exclusion limit (SEL) of plasmodesmata, thereby allowing viral ribonucleocapsids to spread directly to neighboring cells. This Cauliflower mosaic virus (strain Strasbourg) (CaMV) protein is Movement protein.